The following is a 223-amino-acid chain: GRF1-interacting factor 3 (223 aa).

The disordered stretch occupies residues 179 to 223; it reads ANNAGPNDASGGGKPDGTNMSQSGADGQGGSAARHGGGDAKTEGK. A compositionally biased stretch (basic and acidic residues) spans 214-223; that stretch reads GGGDAKTEGK.

The protein belongs to the SS18 family. Interacts with GRF1. Predominantly expressed in shoot tips containing the shoot apical meristem (SAM) and flower buds. Also expressed in mature flowers.

In terms of biological role, transcription coactivator that plays a role in the regulation of cell expansion in leaf and cotyledons tissues. Component of a network formed by miR396, the GRFs and their interacting factors (GIFs) acting in the regulation of meristem function, at least partially through the control of cell proliferation. GIFs are involved in the positive regulation of cell proliferation of lateral organs in a functionally redundant manner. The sequence is that of GRF1-interacting factor 3 (GIF3) from Arabidopsis thaliana (Mouse-ear cress).